The primary structure comprises 1344 residues: Myb-binding protein 1A (1344 aa).

The disordered stretch occupies residues 1 to 24; sequence MAEMKSPTKAEPASPAEAPQGDRR. N-acetylalanine is present on alanine 2. The segment at 2-580 is interaction with MYB; the sequence is AEMKSPTKAE…WDQMMSTLKE (579 aa). Phosphoserine is present on serine 14. N6-acetyllysine is present on residues lysine 69 and lysine 156. 2 short sequence motifs (nuclear export signal) span residues 238–256 and 261–279; these read SEDNIPSLVNILKVAANSV and KLPDVALNLLRLALQENKF. Disordered regions lie at residues 696 to 752 and 1150 to 1344; these read NEDE…DVDP and PKSE…VQTP. The segment covering 708 to 730 has biased composition (basic and acidic residues); that stretch reads TDEKQLKHGEDADSDSEDSKNSE. A compositionally biased stretch (acidic residues) spans 731–746; that stretch reads SDVDSEDGEESEEEDR. A compositionally biased stretch (basic and acidic residues) spans 1150–1161; sequence PKSEKKNVKDIP. A Glycyl lysine isopeptide (Lys-Gly) (interchain with G-Cter in SUMO2) cross-link involves residue lysine 1151. Residues 1154–1344 form a required for nuclear and nucleolar localization region; the sequence is KKNVKDIPSD…RVARRRVQTP (191 aa). Residues serine 1162 and serine 1166 each carry the phosphoserine modification. The span at 1170–1187 shows a compositional bias: basic residues; sequence TKRKKKGFLPETKKRKKL. Phosphoserine is present on serine 1189. Threonine 1193 is modified (phosphothreonine). Serine 1221 and serine 1246 each carry phosphoserine. Residues 1247–1256 are compositionally biased toward low complexity; the sequence is PAPNNPTLSP. Threonine 1253 is modified (phosphothreonine). The residue at position 1255 (serine 1255) is a Phosphoserine. Threonine 1258 and threonine 1280 each carry phosphothreonine. Residues serine 1283, serine 1305, and serine 1318 each carry the phosphoserine modification. Basic residues predominate over residues 1301–1316; it reads VKRRSSQSALPKKRAR. A compositionally biased stretch (low complexity) spans 1317 to 1329; sequence LSLVSRSPSLLQS. At arginine 1322 the chain carries Citrulline. Residues serine 1323, serine 1325, and serine 1329 each carry the phosphoserine modification. Over residues 1331 to 1344 the composition is skewed to basic residues; that stretch reads IRKRRVARRRVQTP.

This sequence belongs to the MYBBP1A family. In terms of assembly, binds to and represses JUN and MYB via the leucine zipper regions present in these proteins. Also binds to and represses PPARGC1A: this interaction is abrogated when PPARGC1A is phosphorylated by MAPK1/ERK. Binds to and stimulates transcription by AHR. Binds to KPNA2. Component of the B-WICH complex, at least composed of SMARCA5/SNF2H, BAZ1B/WSTF, SF3B1, DEK, MYO1C, ERCC6, MYBBP1A and DDX21. Interacts with CLOCK and CRY1. Post-translationally, citrullinated by PADI4.

It is found in the nucleus. The protein localises to the nucleolus. Its subcellular location is the cytoplasm. Its function is as follows. May activate or repress transcription via interactions with sequence specific DNA-binding proteins. Repression may be mediated at least in part by histone deacetylase activity (HDAC activity). Acts as a corepressor and in concert with CRY1, represses the transcription of the core circadian clock component PER2. Preferentially binds to dimethylated histone H3 'Lys-9' (H3K9me2) on the PER2 promoter. Has a role in rRNA biogenesis together with PWP1. The chain is Myb-binding protein 1A (Mybbp1a) from Rattus norvegicus (Rat).